The primary structure comprises 345 residues: Probable glucan endo-1,3-beta-glucosidase BG4 (345 aa).

A signal peptide spans 1–22; the sequence is MLYSPKKLFLFFLSCIVLYVNS. 2 N-linked (GlcNAc...) asparagine glycosylation sites follow: Asn-23 and Asn-119. Glu-128 (proton donor) is an active-site residue. Glu-267 (nucleophile) is an active-site residue. N-linked (GlcNAc...) asparagine glycosylation is found at Asn-277 and Asn-306.

This sequence belongs to the glycosyl hydrolase 17 family.

It localises to the secreted. It catalyses the reaction Hydrolysis of (1-&gt;3)-beta-D-glucosidic linkages in (1-&gt;3)-beta-D-glucans.. Its function is as follows. May play a role in plant defense against pathogens. The sequence is that of Probable glucan endo-1,3-beta-glucosidase BG4 from Arabidopsis thaliana (Mouse-ear cress).